Reading from the N-terminus, the 119-residue chain is Circadian clock oscillator protein KaiB (119 aa).

Belongs to the KaiB family. In terms of assembly, may undergo a major conformational rearrangment; in the free state forms homooligomers. When bound to KaiC switches to a monomeric thioredoxin-fold (KaiB(fs)). The active oscillator complex is probably KaiC(6):KaiB(6).

Functionally, component of the KaiBC clock protein complex, which constitutes the main circadian regulator in cyanobacteria; it may modify the ATPase activity of KaiC. Its function is as follows. May be a metamorphic protein which reversibly switches between an inactive tetrameric fold and a rare, thioredoxin-like monomeric fold (KaiB(fs)). KaiB(fs) binds phospho-KaiC, and perhaps clock output effectors. The sequence is that of Circadian clock oscillator protein KaiB from Prochlorococcus marinus (strain MIT 9313).